The chain runs to 322 residues: Rhomboid-like protein 16, chloroplastic (322 aa).

A chloroplast-targeting transit peptide spans 1 to 52 (MHAIFCRRVAVGCSSPQLTKLVTKQASQSRHSLSHLLPFDLSSRFVPPYVVS). 6 helical membrane passes run 110–130 (WING…AVFT), 166–186 (FSHV…YFGA), 201–221 (YFAG…LSVI), 238–258 (IGKL…MLLY), 265–285 (FGLM…LNII), and 295–315 (TLTS…WARI).

The protein belongs to the peptidase S54 family.

The protein resides in the plastid. It is found in the chloroplast membrane. Its function is as follows. Rhomboid-type serine protease that catalyzes intramembrane proteolysis. May cleave the plastid translocon component Tic40. The protein is Rhomboid-like protein 16, chloroplastic of Arabidopsis thaliana (Mouse-ear cress).